The chain runs to 503 residues: Arginyl-tRNA--protein transferase 1 (503 aa).

The protein belongs to the R-transferase family.

The protein localises to the cytoplasm. The catalysed reaction is an N-terminal L-alpha-aminoacyl-[protein] + L-arginyl-tRNA(Arg) = an N-terminal L-arginyl-L-aminoacyl-[protein] + tRNA(Arg) + H(+). Its function is as follows. Involved in the post-translational conjugation of arginine to the N-terminal aspartate or glutamate of a protein. This arginylation is required for degradation of the protein via the ubiquitin pathway. Does not arginylate cysteine residues. The polypeptide is Arginyl-tRNA--protein transferase 1 (ATE1) (Saccharomyces cerevisiae (strain ATCC 204508 / S288c) (Baker's yeast)).